The primary structure comprises 419 residues: Tyrosine--tRNA ligase 1 (419 aa).

Tyr-35 contributes to the L-tyrosine binding site. The 'HIGH' region motif lies at 40–49 (PTAGSLHIGH). L-tyrosine is bound by residues Tyr-172 and Gln-176. Residues 232–236 (KFGKT) carry the 'KMSKS' region motif. An ATP-binding site is contributed by Lys-235. Residues 353-418 (QDLVELLIES…KKHFCLVKRA (66 aa)) form the S4 RNA-binding domain.

The protein belongs to the class-I aminoacyl-tRNA synthetase family. TyrS type 1 subfamily. As to quaternary structure, homodimer.

The protein localises to the cytoplasm. The enzyme catalyses tRNA(Tyr) + L-tyrosine + ATP = L-tyrosyl-tRNA(Tyr) + AMP + diphosphate + H(+). Its function is as follows. Catalyzes the attachment of tyrosine to tRNA(Tyr) in a two-step reaction: tyrosine is first activated by ATP to form Tyr-AMP and then transferred to the acceptor end of tRNA(Tyr). The polypeptide is Tyrosine--tRNA ligase 1 (Vibrio parahaemolyticus serotype O3:K6 (strain RIMD 2210633)).